The following is a 286-amino-acid chain: Aquaporin PIP1-3 (286 aa).

The residue at position 1 (Met-1) is an N-acetylmethionine. The disordered stretch occupies residues 1–33 (MEGKEEDVRVGANKFPERQPIGTSAQTDKDYKE). Residues 1 to 54 (MEGKEEDVRVGANKFPERQPIGTSAQTDKDYKEPPPAPFFEPGELSSWSFYRAG) lie on the Cytoplasmic side of the membrane. Residues 55–75 (IAEFIATFLFLYITVLTVMGV) traverse the membrane as a helical segment. Over 76 to 81 (KRAPNM) the chain is Extracellular. The helical transmembrane segment at 82–102 (CASVGIQGIAWAFGGMIFALV) threads the bilayer. Topologically, residues 103–132 (YCTAGISGGHINPAVTFGLFLARKLSLTRA) are cytoplasmic. The NPA 1 motif lies at 114 to 116 (NPA). The helical transmembrane segment at 133-153 (VFYIVMQCLGAICGAGVVKGF) threads the bilayer. The Extracellular portion of the chain corresponds to 154 to 174 (QPNPYQTLGGGANTVAHGYTK). A helical membrane pass occupies residues 175–195 (GSGLGAEIIGTFVLVYTVFSA). The Cytoplasmic segment spans residues 196-208 (TDAKRSARDSHVP). The helical transmembrane segment at 209-229 (ILAPLPIGFAVFLVHLATIPI) threads the bilayer. Topologically, residues 230–256 (TGTGINPARSLGAAIIYNKDHAWDDHW) are extracellular. The NPA 2 motif lies at 235 to 237 (NPA). The helical transmembrane segment at 257 to 277 (IFWVGPFIGAALAALYHQLVI) threads the bilayer. The Cytoplasmic segment spans residues 278–286 (RAIPFKSRS). Residue Ser-284 is modified to Phosphoserine.

Belongs to the MIP/aquaporin (TC 1.A.8) family. PIP (TC 1.A.8.11) subfamily. In terms of tissue distribution, expressed in roots, above ground, ripening fruit, flower buds, green siliques and senescing leaves.

The protein localises to the cell membrane. Functionally, water channel required to facilitate the transport of water across cell membrane. Its function is impaired by Hg(2+). This Arabidopsis thaliana (Mouse-ear cress) protein is Aquaporin PIP1-3 (PIP1-3).